The primary structure comprises 224 residues: Phosphoribosylformylglycinamidine synthase subunit PurQ (224 aa).

The Glutamine amidotransferase type-1 domain maps to 4-224; that stretch reads RIGVVTFPGT…YSALDAVLTG (221 aa). The active-site Nucleophile is C87. Active-site residues include H195 and E197.

As to quaternary structure, part of the FGAM synthase complex composed of 1 PurL, 1 PurQ and 2 PurS subunits.

Its subcellular location is the cytoplasm. The catalysed reaction is N(2)-formyl-N(1)-(5-phospho-beta-D-ribosyl)glycinamide + L-glutamine + ATP + H2O = 2-formamido-N(1)-(5-O-phospho-beta-D-ribosyl)acetamidine + L-glutamate + ADP + phosphate + H(+). The enzyme catalyses L-glutamine + H2O = L-glutamate + NH4(+). Its pathway is purine metabolism; IMP biosynthesis via de novo pathway; 5-amino-1-(5-phospho-D-ribosyl)imidazole from N(2)-formyl-N(1)-(5-phospho-D-ribosyl)glycinamide: step 1/2. Functionally, part of the phosphoribosylformylglycinamidine synthase complex involved in the purines biosynthetic pathway. Catalyzes the ATP-dependent conversion of formylglycinamide ribonucleotide (FGAR) and glutamine to yield formylglycinamidine ribonucleotide (FGAM) and glutamate. The FGAM synthase complex is composed of three subunits. PurQ produces an ammonia molecule by converting glutamine to glutamate. PurL transfers the ammonia molecule to FGAR to form FGAM in an ATP-dependent manner. PurS interacts with PurQ and PurL and is thought to assist in the transfer of the ammonia molecule from PurQ to PurL. The chain is Phosphoribosylformylglycinamidine synthase subunit PurQ from Mycobacterium bovis (strain ATCC BAA-935 / AF2122/97).